A 625-amino-acid chain; its full sequence is 1-deoxy-D-xylulose-5-phosphate synthase (625 aa).

Thiamine diphosphate is bound by residues H74 and 115-117 (GHS). A Mg(2+)-binding site is contributed by D146. Thiamine diphosphate contacts are provided by residues 147-148 (GA), N175, Y286, and E367. N175 is a Mg(2+) binding site.

The protein belongs to the transketolase family. DXPS subfamily. In terms of assembly, homodimer. The cofactor is Mg(2+). It depends on thiamine diphosphate as a cofactor.

The enzyme catalyses D-glyceraldehyde 3-phosphate + pyruvate + H(+) = 1-deoxy-D-xylulose 5-phosphate + CO2. It functions in the pathway metabolic intermediate biosynthesis; 1-deoxy-D-xylulose 5-phosphate biosynthesis; 1-deoxy-D-xylulose 5-phosphate from D-glyceraldehyde 3-phosphate and pyruvate: step 1/1. Functionally, catalyzes the acyloin condensation reaction between C atoms 2 and 3 of pyruvate and glyceraldehyde 3-phosphate to yield 1-deoxy-D-xylulose-5-phosphate (DXP). This is 1-deoxy-D-xylulose-5-phosphate synthase from Lachnoclostridium phytofermentans (strain ATCC 700394 / DSM 18823 / ISDg) (Clostridium phytofermentans).